Reading from the N-terminus, the 180-residue chain is Probable macrolide acetyltransferase (180 aa).

Belongs to the transferase hexapeptide repeat family.

In Lysinibacillus sphaericus (Bacillus sphaericus), this protein is Probable macrolide acetyltransferase.